Reading from the N-terminus, the 308-residue chain is Acetylglutamate kinase (308 aa).

Substrate-binding positions include 64-65 (GG), Arg86, and Asn192.

It belongs to the acetylglutamate kinase family. ArgB subfamily.

It is found in the cytoplasm. The catalysed reaction is N-acetyl-L-glutamate + ATP = N-acetyl-L-glutamyl 5-phosphate + ADP. It participates in amino-acid biosynthesis; L-arginine biosynthesis; N(2)-acetyl-L-ornithine from L-glutamate: step 2/4. Its function is as follows. Catalyzes the ATP-dependent phosphorylation of N-acetyl-L-glutamate. This Myxococcus xanthus (strain DK1622) protein is Acetylglutamate kinase.